We begin with the raw amino-acid sequence, 161 residues long: MNIRIGHGFDVHKFGGELPLILGGVEVPYDTGLVAHSDGDVVLHAISDAILGAMALGDIGKHFPDTDPDFKGADSRVLLRHCYQLALDKGYRLGNLDVTIIAQAPKMLPHIQAIRECLSADLESDIEAINVKATTTEKLGFTGRKEGIAVEAVVLMCAAPR.

The a divalent metal cation site is built by Asp10 and His12. 4-CDP-2-C-methyl-D-erythritol 2-phosphate is bound by residues 10–12 (DVH) and 36–37 (HS). Residue His44 participates in a divalent metal cation binding. Residues 58–60 (DIG), 63–67 (FPDTD), 102–108 (AQAPKML), 134–137 (TTTE), Phe141, and Arg144 contribute to the 4-CDP-2-C-methyl-D-erythritol 2-phosphate site.

The protein belongs to the IspF family. As to quaternary structure, homotrimer. Requires a divalent metal cation as cofactor.

The enzyme catalyses 4-CDP-2-C-methyl-D-erythritol 2-phosphate = 2-C-methyl-D-erythritol 2,4-cyclic diphosphate + CMP. It functions in the pathway isoprenoid biosynthesis; isopentenyl diphosphate biosynthesis via DXP pathway; isopentenyl diphosphate from 1-deoxy-D-xylulose 5-phosphate: step 4/6. Involved in the biosynthesis of isopentenyl diphosphate (IPP) and dimethylallyl diphosphate (DMAPP), two major building blocks of isoprenoid compounds. Catalyzes the conversion of 4-diphosphocytidyl-2-C-methyl-D-erythritol 2-phosphate (CDP-ME2P) to 2-C-methyl-D-erythritol 2,4-cyclodiphosphate (ME-CPP) with a corresponding release of cytidine 5-monophosphate (CMP). This Shewanella loihica (strain ATCC BAA-1088 / PV-4) protein is 2-C-methyl-D-erythritol 2,4-cyclodiphosphate synthase.